Reading from the N-terminus, the 713-residue chain is Polyribonucleotide nucleotidyltransferase (713 aa).

D498 and D504 together coordinate Mg(2+). One can recognise a KH domain in the interval 565 to 631 (PRILSLKVPV…RIEDLTREAK (67 aa)). The 69-residue stretch at 633 to 701 (GEIYEGTVTR…ERGKIDLIRP (69 aa)) folds into the S1 motif domain.

The protein belongs to the polyribonucleotide nucleotidyltransferase family. The cofactor is Mg(2+).

It is found in the cytoplasm. The catalysed reaction is RNA(n+1) + phosphate = RNA(n) + a ribonucleoside 5'-diphosphate. Involved in mRNA degradation. Catalyzes the phosphorolysis of single-stranded polyribonucleotides processively in the 3'- to 5'-direction. The sequence is that of Polyribonucleotide nucleotidyltransferase from Thermus thermophilus (strain ATCC 27634 / DSM 579 / HB8).